Here is a 493-residue protein sequence, read N- to C-terminus: Aminotransferase swnA (493 aa).

It belongs to the class-I pyridoxal-phosphate-dependent aminotransferase family. It depends on pyridoxal 5'-phosphate as a cofactor.

It functions in the pathway mycotoxin biosynthesis. Aminotransferase; part of the gene cluster that mediates the biosynthesis of swainsonine (SW), a cytotoxic fungal alkaloid and a potential cancer therapy drug. Swainsonine production occurs via a multibranched pathway and is dispensable for fungal colonization of plants and infection of insect hosts. The first step of swainsonine biosynthesis is the production of the precursor pipecolic acid (PA) via conversion of L-lysine (Lys) to 1-piperideine-6-carboxylate (P6C) by the aminotransferase swnA, the latter being further reduced to PA by the reductase swnR. The PKS-NRPS hybrid synthetase swnK uptakes and condensates PA and malonyl-CoA with and without skipping of the ketoreductase (KR) domain in order to produce 3 intermediates, 1-oxoindolizidine, (1S)-1-hydroxyindolizin, and (1R)-1-hydroxyindolizine; with the transisomer (1S)-1-hydroxyindolizin being predominant. The terminal thioester reductase (TE) domain of swnK is involved in reduction of the thioester bond to release the intermediate aldehydes. The oxidoreductase swnN could contribute to the reduction of 1-oxoindolizidine to (1S)-1-hydroxyindolizin and (1R)-1-hydroxyindolizine, contributing to the major route of SW production. The dioxygenase swnH2 would be responsible for the oxidization of (1R)-1-hydroxyindolizine into (1R,2S)-1,2-dihydroxyindolizine and of (1S)-1-hydroxyindolizin to yield both (1R,2S)-1,2-dihydroxyindolizine and (1S,2S)-1,2-dihydroxyindolizine. The dioxygenase swnH1 then performs the conversion of the 1,2-dihydroxyindolizine epimers to SW. The protein is Aminotransferase swnA of Arthroderma benhamiae (strain ATCC MYA-4681 / CBS 112371) (Trichophyton mentagrophytes).